A 423-amino-acid chain; its full sequence is Acyl-coenzyme A diphosphatase FITM2 (423 aa).

The disordered stretch occupies residues 1 to 47; sequence MATKRRPLRPNLGGTAGSPSSSGSNMNFRPGGPDITRSEARGTRPTA. Topologically, residues 1–75 are cytoplasmic; that stretch reads MATKRRPLRP…KTIFFNTDLK (75 aa). The chain crosses the membrane as a helical span at residues 76-96; it reads VALYLGSLFVISVIGDFVPFP. The Lumenal segment spans residues 97–113; sequence KTYFARSDNLFNQYFVK. A helical membrane pass occupies residues 114–134; that stretch reads IGWGWTLLFVVPFLVLSAYTI. Over 135-146 the chain is Cytoplasmic; that stretch reads TCGDHKRMLRHH. Residues 147-167 form a helical membrane-spanning segment; sequence FPRIVIATFFWFFWTKLFNVV. Residues 168–191 are Lumenal-facing; the sequence is ENSYGRCTTKGYATKSSCLKAGHL. A helical transmembrane segment spans residues 192–212; it reads WKGFDISGHAFILIHSSLVLI. The active site involves H200. Residues 213–270 are Cytoplasmic-facing; that stretch reads EEARPIIRWETIKEHIRNERHNRSTAENSGTNPLRTLNEEQMRSLQFLYKRLTPIIRT. The chain crosses the membrane as a helical span at residues 271–291; sequence LFIGMAALQLLWDIMLVGTML. The Lumenal portion of the chain corresponds to 292-299; the sequence is YYHRMIEK. H294 is a catalytic residue. The helical transmembrane segment at 300 to 320 threads the bilayer; that stretch reads VISGIIAILTWYFTYRFWYPT. Topologically, residues 321 to 423 are cytoplasmic; the sequence is PGLLPEAPGN…RDREQQTLES (103 aa). 2 disordered regions span residues 344–381 and 400–423; these read FKRP…PRDQ and AAAN…TLES. Positions 351–367 are enriched in low complexity; it reads STGAATTSSGSNSSRTN. Basic and acidic residues predominate over residues 409-423; that stretch reads QQKRERDREQQTLES.

The protein belongs to the FIT family. FIT2 subfamily.

It is found in the endoplasmic reticulum membrane. The enzyme catalyses an acyl-CoA + H2O = an acyl-4'-phosphopantetheine + adenosine 3',5'-bisphosphate + 2 H(+). Functionally, fatty acyl-coenzyme A (CoA) diphosphatase that hydrolyzes fatty acyl-CoA to yield acyl-4'-phosphopantetheine and adenosine 3',5'-bisphosphate. Preferentially hydrolyzes unsaturated long-chain acyl-CoA substrates in the endoplasmic reticulum (ER) lumen. This catalytic activity is required for maintaining ER structure and for lipid droplets (LDs) biogenesis, which are lipid storage organelles involved in maintaining lipid and energy homeostasis. May directly bind to diacylglycerol (DAGs) and triacylglycerol, which is also important for LD biogenesis. May support directional budding of nacent LDs from the ER into the cytosol by reducing DAG levels at sites of LD formation. Plays a role in the regulation of cell morphology and cytoskeletal organization. Required for correct morphology of nociceptive multi-dendritic sensory neurons. Required for normal mechanical amplification in hearing. This Drosophila melanogaster (Fruit fly) protein is Acyl-coenzyme A diphosphatase FITM2.